The following is a 382-amino-acid chain: Dual-specificity RNA methyltransferase RlmN (382 aa).

Glu96 (proton acceptor) is an active-site residue. In terms of domain architecture, Radical SAM core spans 102-342 (QGKRGTLCVS…VRTTRGEDID (241 aa)). Cys109 and Cys345 are disulfide-bonded. The [4Fe-4S] cluster site is built by Cys116, Cys120, and Cys123. S-adenosyl-L-methionine-binding positions include 170–171 (GE), Ser202, 224–226 (SLH), and Asn302. The active-site S-methylcysteine intermediate is the Cys345.

It belongs to the radical SAM superfamily. RlmN family. Requires [4Fe-4S] cluster as cofactor.

The protein localises to the cytoplasm. The enzyme catalyses adenosine(2503) in 23S rRNA + 2 reduced [2Fe-2S]-[ferredoxin] + 2 S-adenosyl-L-methionine = 2-methyladenosine(2503) in 23S rRNA + 5'-deoxyadenosine + L-methionine + 2 oxidized [2Fe-2S]-[ferredoxin] + S-adenosyl-L-homocysteine. It carries out the reaction adenosine(37) in tRNA + 2 reduced [2Fe-2S]-[ferredoxin] + 2 S-adenosyl-L-methionine = 2-methyladenosine(37) in tRNA + 5'-deoxyadenosine + L-methionine + 2 oxidized [2Fe-2S]-[ferredoxin] + S-adenosyl-L-homocysteine. Functionally, specifically methylates position 2 of adenine 2503 in 23S rRNA and position 2 of adenine 37 in tRNAs. m2A2503 modification seems to play a crucial role in the proofreading step occurring at the peptidyl transferase center and thus would serve to optimize ribosomal fidelity. This chain is Dual-specificity RNA methyltransferase RlmN, found in Pseudomonas fluorescens (strain SBW25).